Here is a 350-residue protein sequence, read N- to C-terminus: Hydroxymethylglutaryl-CoA synthase (350 aa).

Glu83 (proton donor/acceptor) is an active-site residue. The Acyl-thioester intermediate role is filled by Cys115. The (3S)-3-hydroxy-3-methylglutaryl-CoA site is built by Cys115 and Thr156. A CoA-binding site is contributed by Arg204. (3S)-3-hydroxy-3-methylglutaryl-CoA-binding residues include Thr206 and His239. His239 acts as the Proton donor/acceptor in catalysis. Residue Lys244 participates in CoA binding. Residues Asn271 and Ser301 each coordinate (3S)-3-hydroxy-3-methylglutaryl-CoA.

The protein belongs to the thiolase-like superfamily. Archaeal HMG-CoA synthase family. As to quaternary structure, interacts with acetoacetyl-CoA thiolase that catalyzes the precedent step in the pathway and with a DUF35 protein. The acetoacetyl-CoA thiolase/HMG-CoA synthase complex channels the intermediate via a fused CoA-binding site, which allows for efficient coupling of the endergonic thiolase reaction with the exergonic HMGCS reaction.

The enzyme catalyses acetoacetyl-CoA + acetyl-CoA + H2O = (3S)-3-hydroxy-3-methylglutaryl-CoA + CoA + H(+). It participates in metabolic intermediate biosynthesis; (R)-mevalonate biosynthesis; (R)-mevalonate from acetyl-CoA: step 2/3. Catalyzes the condensation of acetyl-CoA with acetoacetyl-CoA to form 3-hydroxy-3-methylglutaryl-CoA (HMG-CoA). Functions in the mevalonate (MVA) pathway leading to isopentenyl diphosphate (IPP), a key precursor for the biosynthesis of isoprenoid compounds that are building blocks of archaeal membrane lipids. The polypeptide is Hydroxymethylglutaryl-CoA synthase (Thermococcus sibiricus (strain DSM 12597 / MM 739)).